A 97-amino-acid polypeptide reads, in one-letter code: Protein S100-A10 (97 aa).

K23, K28, K54, and K57 each carry N6-acetyllysine. The EF-hand domain occupies 47–82; the sequence is KDPLAVDKIMKDLDQCRDGKVGFQSFLSLVAGLTIA. Positions 60-71 are ancestral calcium site; the sequence is DQCRDGKVGFQS.

It belongs to the S-100 family. In terms of assembly, heterotetramer containing 2 light chains of S100A10/p11 and 2 heavy chains of ANXA2/p36. Interacts with SCN10A. Interacts with TASOR.

Its function is as follows. Because S100A10 induces the dimerization of ANXA2/p36, it may function as a regulator of protein phosphorylation in that the ANXA2 monomer is the preferred target (in vitro) of tyrosine-specific kinase. The polypeptide is Protein S100-A10 (S100a10) (Mus musculus (Mouse)).